A 487-amino-acid polypeptide reads, in one-letter code: 3-octaprenyl-4-hydroxybenzoate carboxy-lyase (487 aa).

Mn(2+) is bound at residue N172. Prenylated FMN contacts are provided by residues 175 to 177, 189 to 191, and 194 to 195; these read IYR, RWL, and RG. Residue E238 participates in Mn(2+) binding. D287 (proton donor) is an active-site residue.

It belongs to the UbiD family. Homohexamer. The cofactor is prenylated FMN. Mn(2+) serves as cofactor.

The protein resides in the cell membrane. It carries out the reaction a 4-hydroxy-3-(all-trans-polyprenyl)benzoate + H(+) = a 2-(all-trans-polyprenyl)phenol + CO2. Its pathway is cofactor biosynthesis; ubiquinone biosynthesis. In terms of biological role, catalyzes the decarboxylation of 3-octaprenyl-4-hydroxy benzoate to 2-octaprenylphenol, an intermediate step in ubiquinone biosynthesis. The chain is 3-octaprenyl-4-hydroxybenzoate carboxy-lyase from Nitrosococcus oceani (strain ATCC 19707 / BCRC 17464 / JCM 30415 / NCIMB 11848 / C-107).